We begin with the raw amino-acid sequence, 433 residues long: Xylose isomerase (433 aa).

Catalysis depends on residues H99 and D102. The Mg(2+) site is built by E230, E266, H269, D294, D305, D307, and D337.

It belongs to the xylose isomerase family. Homotetramer. Mg(2+) serves as cofactor.

The protein localises to the cytoplasm. The catalysed reaction is alpha-D-xylose = alpha-D-xylulofuranose. This chain is Xylose isomerase, found in Cereibacter sphaeroides (strain ATCC 17023 / DSM 158 / JCM 6121 / CCUG 31486 / LMG 2827 / NBRC 12203 / NCIMB 8253 / ATH 2.4.1.) (Rhodobacter sphaeroides).